A 270-amino-acid polypeptide reads, in one-letter code: MSEMEQQPIFKIALGIEYDGSKYYGWQRQNEVRSVQEKLEKALSQVANEPITVFCAGRTDAGVHGTGQVVHFETRAQRKDAAWTLGVNANLPGDIAVRWVKHVPADFHARFSATARRYRYVIYNHRLRPAVLSHGVTHFHQPLDAERMQRAAQCLLGENDFTSFRAVQCQSRTPWRNVMHINVTRYGAYVVVDIKANAFVHHMVRNIVGSLMEVGAGNQPESWMAELLAAKDRTLAAATAKAEGLYLVSVDYPAHYDLPVLPMGPLFLAD.

Residue D60 is the Nucleophile of the active site. The segment at 107–111 (FHARF) is RNA binding. Substrate is bound at residue Y118. Residues 168 to 172 (QCQSR) are interaction with tRNA.

Belongs to the tRNA pseudouridine synthase TruA family. Homodimer.

It catalyses the reaction uridine(38/39/40) in tRNA = pseudouridine(38/39/40) in tRNA. Formation of pseudouridine at positions 38, 39 and 40 in the anticodon stem and loop of transfer RNAs. The protein is tRNA pseudouridine synthase A of Klebsiella pneumoniae (strain 342).